The primary structure comprises 131 residues: D-ribose pyranase (131 aa).

The Proton donor role is filled by His20. Substrate is bound by residues Asp28, His98, and 120–122 (YAN).

It belongs to the RbsD / FucU family. RbsD subfamily. In terms of assembly, homodecamer.

The protein localises to the cytoplasm. The enzyme catalyses beta-D-ribopyranose = beta-D-ribofuranose. It functions in the pathway carbohydrate metabolism; D-ribose degradation; D-ribose 5-phosphate from beta-D-ribopyranose: step 1/2. In terms of biological role, catalyzes the interconversion of beta-pyran and beta-furan forms of D-ribose. The chain is D-ribose pyranase from Clostridium novyi (strain NT).